Reading from the N-terminus, the 246-residue chain is tRNA pseudouridine synthase A (246 aa).

The active-site Nucleophile is Asp-52. Tyr-111 provides a ligand contact to substrate.

This sequence belongs to the tRNA pseudouridine synthase TruA family. In terms of assembly, homodimer.

It catalyses the reaction uridine(38/39/40) in tRNA = pseudouridine(38/39/40) in tRNA. Formation of pseudouridine at positions 38, 39 and 40 in the anticodon stem and loop of transfer RNAs. This Ehrlichia ruminantium (strain Welgevonden) protein is tRNA pseudouridine synthase A.